The following is a 442-amino-acid chain: 3-phosphoshikimate 1-carboxyvinyltransferase (442 aa).

3-phosphoshikimate contacts are provided by lysine 23, serine 24, and arginine 28. Lysine 23 contacts phosphoenolpyruvate. 2 residues coordinate phosphoenolpyruvate: glycine 95 and arginine 123. 3-phosphoshikimate is bound by residues serine 167, glutamine 169, aspartate 315, and lysine 342. Glutamine 169 provides a ligand contact to phosphoenolpyruvate. Aspartate 315 serves as the catalytic Proton acceptor. Residues arginine 346 and arginine 390 each coordinate phosphoenolpyruvate.

This sequence belongs to the EPSP synthase family. Monomer.

The protein resides in the cytoplasm. It carries out the reaction 3-phosphoshikimate + phosphoenolpyruvate = 5-O-(1-carboxyvinyl)-3-phosphoshikimate + phosphate. The protein operates within metabolic intermediate biosynthesis; chorismate biosynthesis; chorismate from D-erythrose 4-phosphate and phosphoenolpyruvate: step 6/7. Functionally, catalyzes the transfer of the enolpyruvyl moiety of phosphoenolpyruvate (PEP) to the 5-hydroxyl of shikimate-3-phosphate (S3P) to produce enolpyruvyl shikimate-3-phosphate and inorganic phosphate. The chain is 3-phosphoshikimate 1-carboxyvinyltransferase from Dichelobacter nodosus (strain VCS1703A).